A 179-amino-acid polypeptide reads, in one-letter code: Large ribosomal subunit protein uL5 (179 aa).

Belongs to the universal ribosomal protein uL5 family. As to quaternary structure, part of the 50S ribosomal subunit; part of the 5S rRNA/L5/L18/L25 subcomplex. Contacts the 5S rRNA and the P site tRNA. Forms a bridge to the 30S subunit in the 70S ribosome.

In terms of biological role, this is one of the proteins that bind and probably mediate the attachment of the 5S RNA into the large ribosomal subunit, where it forms part of the central protuberance. In the 70S ribosome it contacts protein S13 of the 30S subunit (bridge B1b), connecting the 2 subunits; this bridge is implicated in subunit movement. Contacts the P site tRNA; the 5S rRNA and some of its associated proteins might help stabilize positioning of ribosome-bound tRNAs. This is Large ribosomal subunit protein uL5 from Methylococcus capsulatus (strain ATCC 33009 / NCIMB 11132 / Bath).